The primary structure comprises 502 residues: UPF0371 protein CLB_0371 (502 aa).

It belongs to the UPF0371 family.

The chain is UPF0371 protein CLB_0371 from Clostridium botulinum (strain ATCC 19397 / Type A).